Consider the following 360-residue polypeptide: Ribosomal RNA large subunit methyltransferase F (360 aa).

The interval methionine 1–threonine 36 is disordered. Residues serine 23 to threonine 36 show a composition bias toward low complexity.

It belongs to the methyltransferase superfamily. METTL16/RlmF family.

The protein resides in the cytoplasm. It carries out the reaction adenosine(1618) in 23S rRNA + S-adenosyl-L-methionine = N(6)-methyladenosine(1618) in 23S rRNA + S-adenosyl-L-homocysteine + H(+). Its function is as follows. Specifically methylates the adenine in position 1618 of 23S rRNA. This chain is Ribosomal RNA large subunit methyltransferase F, found in Shewanella denitrificans (strain OS217 / ATCC BAA-1090 / DSM 15013).